The following is a 257-amino-acid chain: Paired box protein 1 homolog (257 aa).

Residues 26-37 (TTPSSTSTTPSS) show a composition bias toward low complexity. The disordered stretch occupies residues 26–58 (TTPSSTSTTPSSDNGIQQYSSISTSSGYAPANS). Residues 38–52 (DNGIQQYSSISTSSG) are compositionally biased toward polar residues. The segment at residues 61-187 (KTAEVNQLGG…SSISRILRNK (127 aa)) is a DNA-binding region (paired). The interval 64–120 (EVNQLGGVFVNGRPLPFEMRCKIVELSRQGTRPCDISRQLKISHGCVSKILTRFSEN) is PAI subdomain. The segment at 139 to 187 (KVVEYIRSLKRSDPGIFAWEIRDRLISADICDRANLPSVSSISRILRNK) is RED subdomain.

The protein localises to the nucleus. Its function is as follows. Transcription factor. May play a role in pharyngeal cell differentiation. May have a protective role in response to infection by the Gram-negative bacterium Vibrio cholerae. This Caenorhabditis elegans protein is Paired box protein 1 homolog.